Here is a 177-residue protein sequence, read N- to C-terminus: Preprotein translocase subunit SECE1 (177 aa).

Residues Met-1 to Arg-38 constitute a chloroplast transit peptide. The tract at residues Arg-60 to Val-87 is disordered. Positions Gly-64–Ser-79 are enriched in low complexity. The chain crosses the membrane as a helical span at residues Val-140 to Ala-160.

Belongs to the SecE/SEC61-gamma family. In terms of assembly, part of the Sec protein translocation apparatus. Interacts with SCY1 and ALB3.

Its subcellular location is the plastid. It localises to the chloroplast thylakoid membrane. Involved in the import/insertion pathway in the thylakoids. The signal recognition particle is not involved in the insertion of SECE1 in the thylakoid membrane. This is Preprotein translocase subunit SECE1 (SECE1) from Arabidopsis thaliana (Mouse-ear cress).